A 349-amino-acid polypeptide reads, in one-letter code: tRNA pseudouridine synthase D (349 aa).

Phenylalanine 27 provides a ligand contact to substrate. The active-site Nucleophile is aspartate 80. Asparagine 129 serves as a coordination point for substrate. One can recognise a TRUD domain in the interval glycine 155–leucine 303. Phenylalanine 329 serves as a coordination point for substrate.

Belongs to the pseudouridine synthase TruD family.

The catalysed reaction is uridine(13) in tRNA = pseudouridine(13) in tRNA. Responsible for synthesis of pseudouridine from uracil-13 in transfer RNAs. The polypeptide is tRNA pseudouridine synthase D (Escherichia coli O8 (strain IAI1)).